A 284-amino-acid polypeptide reads, in one-letter code: Protease HtpX (284 aa).

Helical transmembrane passes span 4 to 24 (ILLF…ILSL) and 33 to 53 (MGLL…SLLM). Histidine 139 contributes to the Zn(2+) binding site. Glutamate 140 is an active-site residue. Histidine 143 serves as a coordination point for Zn(2+). The next 2 helical transmembrane spans lie at 147-167 (GDMV…IFAA) and 187-207 (IYFL…SMIA). Glutamate 215 is a Zn(2+) binding site.

This sequence belongs to the peptidase M48B family. Requires Zn(2+) as cofactor.

It localises to the cell inner membrane. This Mannheimia succiniciproducens (strain KCTC 0769BP / MBEL55E) protein is Protease HtpX.